We begin with the raw amino-acid sequence, 219 residues long: MTQDEMKKAAGWAALKYVEKDSIVGVGTGSTVNHFIDALATMKADIEGAVSSSEASTQKMKALGIPVYDLNSVDKLSVYVDGADEINGHMDMIKGGGAALTREKIVAAVAEKFVCIVDNTKQVDILGKFPLPVEVIPMARSYVARELVKLGGDPVYREGVVTDNGNVILDVYNLKIINPKELEEKINAIVGVVTNGLFAKRGADVLLVGTPEGVKTFTA.

Substrate contacts are provided by residues 28-31, 81-84, and 94-97; these read TGST, DGAD, and KGGG. Glu-103 functions as the Proton acceptor in the catalytic mechanism. Substrate is bound at residue Lys-121.

This sequence belongs to the ribose 5-phosphate isomerase family. As to quaternary structure, homodimer.

The enzyme catalyses aldehydo-D-ribose 5-phosphate = D-ribulose 5-phosphate. Its pathway is carbohydrate degradation; pentose phosphate pathway; D-ribose 5-phosphate from D-ribulose 5-phosphate (non-oxidative stage): step 1/1. Functionally, catalyzes the reversible conversion of ribose-5-phosphate to ribulose 5-phosphate. The chain is Ribose-5-phosphate isomerase A from Shewanella sp. (strain ANA-3).